Reading from the N-terminus, the 180-residue chain is Large ribosomal subunit protein uL5 (180 aa).

This sequence belongs to the universal ribosomal protein uL5 family. As to quaternary structure, part of the 50S ribosomal subunit; part of the 5S rRNA/L5/L18/L25 subcomplex. Contacts the 5S rRNA and the P site tRNA. Forms a bridge to the 30S subunit in the 70S ribosome.

Its function is as follows. This is one of the proteins that bind and probably mediate the attachment of the 5S RNA into the large ribosomal subunit, where it forms part of the central protuberance. In the 70S ribosome it contacts protein S13 of the 30S subunit (bridge B1b), connecting the 2 subunits; this bridge is implicated in subunit movement. Contacts the P site tRNA; the 5S rRNA and some of its associated proteins might help stabilize positioning of ribosome-bound tRNAs. The polypeptide is Large ribosomal subunit protein uL5 (Lactobacillus johnsonii (strain CNCM I-12250 / La1 / NCC 533)).